The chain runs to 318 residues: tRNA-modifying protein YgfZ (318 aa).

Folate is bound by residues Trp28 and Trp182.

It belongs to the tRNA-modifying YgfZ family.

The protein localises to the cytoplasm. Folate-binding protein involved in regulating the level of ATP-DnaA and in the modification of some tRNAs. It is probably a key factor in regulatory networks that act via tRNA modification, such as initiation of chromosomal replication. The chain is tRNA-modifying protein YgfZ from Aliivibrio fischeri (strain ATCC 700601 / ES114) (Vibrio fischeri).